We begin with the raw amino-acid sequence, 190 residues long: Somatotropin (190 aa).

Residue His-19 coordinates Zn(2+). Cys-52 and Cys-163 form a disulfide bridge. Glu-172 serves as a coordination point for Zn(2+). Residues Cys-180 and Cys-188 are joined by a disulfide bond.

The protein belongs to the somatotropin/prolactin family.

The protein localises to the secreted. In terms of biological role, growth hormone plays an important role in growth control and involved in the regulation of several anabolic processes. This Crocodylus novaeguineae (Crocodile) protein is Somatotropin (GH).